The chain runs to 404 residues: Probable tRNA sulfurtransferase (404 aa).

The region spanning 60–165 is the THUMP domain; that stretch reads QPVAESLKQI…EEAAYISYET (106 aa). Residues 183 to 184, 208 to 209, R265, G287, and Q296 each bind ATP; these read ML and HF.

This sequence belongs to the ThiI family.

It localises to the cytoplasm. It carries out the reaction [ThiI sulfur-carrier protein]-S-sulfanyl-L-cysteine + a uridine in tRNA + 2 reduced [2Fe-2S]-[ferredoxin] + ATP + H(+) = [ThiI sulfur-carrier protein]-L-cysteine + a 4-thiouridine in tRNA + 2 oxidized [2Fe-2S]-[ferredoxin] + AMP + diphosphate. The enzyme catalyses [ThiS sulfur-carrier protein]-C-terminal Gly-Gly-AMP + S-sulfanyl-L-cysteinyl-[cysteine desulfurase] + AH2 = [ThiS sulfur-carrier protein]-C-terminal-Gly-aminoethanethioate + L-cysteinyl-[cysteine desulfurase] + A + AMP + 2 H(+). It functions in the pathway cofactor biosynthesis; thiamine diphosphate biosynthesis. Functionally, catalyzes the ATP-dependent transfer of a sulfur to tRNA to produce 4-thiouridine in position 8 of tRNAs, which functions as a near-UV photosensor. Also catalyzes the transfer of sulfur to the sulfur carrier protein ThiS, forming ThiS-thiocarboxylate. This is a step in the synthesis of thiazole, in the thiamine biosynthesis pathway. The sulfur is donated as persulfide by IscS. The polypeptide is Probable tRNA sulfurtransferase (Streptococcus sanguinis (strain SK36)).